We begin with the raw amino-acid sequence, 346 residues long: Phosphate acyltransferase (346 aa).

It belongs to the PlsX family. In terms of assembly, homodimer. Probably interacts with PlsY.

It localises to the cytoplasm. It catalyses the reaction a fatty acyl-[ACP] + phosphate = an acyl phosphate + holo-[ACP]. It functions in the pathway lipid metabolism; phospholipid metabolism. Its function is as follows. Catalyzes the reversible formation of acyl-phosphate (acyl-PO(4)) from acyl-[acyl-carrier-protein] (acyl-ACP). This enzyme utilizes acyl-ACP as fatty acyl donor, but not acyl-CoA. The chain is Phosphate acyltransferase from Geotalea daltonii (strain DSM 22248 / JCM 15807 / FRC-32) (Geobacter daltonii).